The sequence spans 835 residues: uncharacterized protein (835 aa).

Disordered regions lie at residues 1–38 (MKTS…VGSR), 317–477 (DFDL…QSGR), 489–668 (SLSK…IKRR), 721–750 (DLEN…VSSF), and 810–835 (QEQQ…ELMF). 3 stretches are compositionally biased toward low complexity: residues 7–37 (STVP…TVGS), 328–351 (NNNN…TPTT), and 361–395 (SSTN…SGSS). Polar residues-rich tracts occupy residues 396–406 (IGNRTEVSSSI) and 415–424 (IIRSKSSLGT). Positions 432–442 (GGSGGGGGGGM) are enriched in gly residues. Over residues 449 to 477 (PISKTPTTMITKTASSSSPNLATSTQSGR) the composition is skewed to polar residues. Over residues 489–510 (SLSKQSSSSNLTRSLPPIIKSP) the composition is skewed to low complexity. Positions 511 to 521 (ISPPGPTPPAP) are enriched in pro residues. Low complexity predominate over residues 522-629 (TLTKSKSTPS…STTSSATKKS (108 aa)). Residues 631–640 (ITKTNPTDEQ) show a composition bias toward polar residues. Composition is skewed to low complexity over residues 641–664 (TTTP…STSS) and 724–750 (NNNN…VSSF). Residues 826–835 (ILDEDDELMF) show a composition bias toward acidic residues.

This is an uncharacterized protein from Dictyostelium discoideum (Social amoeba).